We begin with the raw amino-acid sequence, 318 residues long: MARKKISLIGGGQIGGVLAQLSALRELGDVVLFDIVEGLPQGKTLDIAEASPVDNFDVALSGANDYADIKGSDIVIVTAGLPRKPGMSRDDLIATNAKIMQSVSEGIKQYAPNAFVIVISNPLDAMVTLCQKITGFPSNRVMGMAGVLDSARFAAFIAWELGVSVKDVNAMVLGGHGDTMVPIIRYANVNGVPVMELLERKYNNDKAKAKEVMAALVKRTQGAGGEVVGLLKTGSAFYSPASSAIAMAESILRDQKRLLPVCALLNGEFGVKGYYVGVPCILGSNGIEKIVEFSLDAEEQAMFDNSVAAVKELVDSMK.

NAD(+) is bound by residues Gly-10–Gly-15 and Asp-34. The substrate site is built by Arg-83 and Arg-89. NAD(+) is bound by residues Asn-96 and Ile-119–Asn-121. 2 residues coordinate substrate: Asn-121 and Arg-152. His-176 functions as the Proton acceptor in the catalytic mechanism.

This sequence belongs to the LDH/MDH superfamily. MDH type 3 family.

It catalyses the reaction (S)-malate + NAD(+) = oxaloacetate + NADH + H(+). Functionally, catalyzes the reversible oxidation of malate to oxaloacetate. This chain is Malate dehydrogenase, found in Geotalea uraniireducens (strain Rf4) (Geobacter uraniireducens).